Here is a 306-residue protein sequence, read N- to C-terminus: MGNLVIGSRGSELALWQANHIKERLKKECLIESEIQIVKTKGDKILDTPLNKIGGKGLFTKELEELLLKGAIDLAVHSLKDVPVVFEKGLDLACITKRADVRDTFLSVKFPDLMSLPKGAKVGTTSLRRSMQIKLKRQDLDTESLRGNVQTRLKKLECGEFDAIILAEAGLCRLEIQGAKYRKAFSVEEMIPSMGQGALGVEMLKNHKHFATLQKLNDEKSAFCCRLEREFIKGLNGGCQIPIGVHASLMGDRVKIQAVLGLPNGKEVITKEKQGDKTKAFDLVQELLEEFLQSGAKEILEKAQLF.

At cysteine 239 the chain carries S-(dipyrrolylmethanemethyl)cysteine.

Belongs to the HMBS family. As to quaternary structure, monomer. Dipyrromethane is required as a cofactor.

It catalyses the reaction 4 porphobilinogen + H2O = hydroxymethylbilane + 4 NH4(+). The protein operates within porphyrin-containing compound metabolism; protoporphyrin-IX biosynthesis; coproporphyrinogen-III from 5-aminolevulinate: step 2/4. Tetrapolymerization of the monopyrrole PBG into the hydroxymethylbilane pre-uroporphyrinogen in several discrete steps. The chain is Porphobilinogen deaminase (hemC) from Helicobacter pylori (strain ATCC 700392 / 26695) (Campylobacter pylori).